Here is a 334-residue protein sequence, read N- to C-terminus: Probable tRNA pseudouridine synthase B (334 aa).

The active-site Nucleophile is the D82. The 76-residue stretch at 250-325 (LPKVWIRDSA…IAVDVDKVFM (76 aa)) folds into the PUA domain.

This sequence belongs to the pseudouridine synthase TruB family. Type 2 subfamily.

It carries out the reaction uridine(55) in tRNA = pseudouridine(55) in tRNA. Functionally, could be responsible for synthesis of pseudouridine from uracil-55 in the psi GC loop of transfer RNAs. This chain is Probable tRNA pseudouridine synthase B, found in Thermococcus onnurineus (strain NA1).